We begin with the raw amino-acid sequence, 1746 residues long: Non-reducing polyketide synthase ptaA (1746 aa).

Residues 4–227 are N-terminal acylcarrier protein transacylase domain (SAT); that stretch reads NSGSGTSPWG…ALPVYGGLCH (224 aa). A Ketosynthase family 3 (KS3) domain is found at 361-796; it reads QSKIAIVGMS…GGNTTIAIEE (436 aa). Active-site for beta-ketoacyl synthase activity residues include cysteine 534, histidine 670, and histidine 714. Residues 898–1218 are malonyl-CoA:ACP transacylase (MAT) domain; it reads FAFTGQGASY…LGALHLAGIP (321 aa). The interval 1286–1605 is product template (PT) domain; sequence TSTVHRVIGE…RLLLDRFFSA (320 aa). Residues 1290-1425 form an N-terminal hotdog fold region; it reads HRVIGETFDG…ATLFYGKAND (136 aa). The 311-residue stretch at 1290–1600 folds into the PKS/mFAS DH domain; the sequence is HRVIGETFDG…FRRYPRLLLD (311 aa). Histidine 1322 (proton acceptor; for dehydratase activity) is an active-site residue. Positions 1452–1600 are C-terminal hotdog fold; it reads VANRFSRNMA…FRRYPRLLLD (149 aa). Catalysis depends on aspartate 1511, which acts as the Proton donor; for dehydratase activity. In terms of domain architecture, Carrier spans 1671-1745; the sequence is DSITVKAMAL…DLRAWLLEYY (75 aa). Serine 1705 bears the O-(pantetheine 4'-phosphoryl)serine mark.

The enzyme catalyses holo-[ACP] + 8 malonyl-CoA + 8 H(+) = atrochrysone carboxyl-[ACP] + 8 CO2 + 8 CoA + 2 H2O. It functions in the pathway secondary metabolite biosynthesis. In terms of biological role, non-reducing polyketide synthase; part of the gene cluster that mediates the biosynthesis of pestheic acid, a diphenyl ether which is a biosynthetic precursor of the unique chloropupukeananes. The biosynthesis initiates from condensation of acetate and malonate units catalyzed by the non-reducing PKS ptaA. As the ptaA protein is TE/CLC domain-deficient, hydrolysis and Claisen cyclization of the polyketide could be catalyzed by ptaB containing a beta-lactamase domain. The ptaB protein might hydrolyze the thioester bond between the ACP of ptaA and the intermediate to release atrochrysone carboxylic acid, which is spontaneously dehydrated to form endocrocin anthrone. Endocrocin anthrone is then converted to endocrocin, catalyzed by the anthrone oxygenase ptaC. Spontaneous decarboxylation of endocrocin occurs to generate emodin. An O-methyltransferase (ptaH or ptaI) could methylate emodin to form physcion. PtaJ could then catalyze the oxidative cleavage of physcion, and rotation of the intermediate could then afford desmethylisosulochrin. PtaF, a putative NADH-dependent oxidoreductase, might also participate in the oxidative cleavage step. Desmethylisosulochrin is then transformed by another O-methyltransferase (ptaH or ptaI) to form isosulochrin. Chlorination of isosulochrin by ptaM in the cyclohexadienone B ring then produces chloroisosulochrin. PtaE is responsible for the oxidative coupling reactions of both benzophenones isosulochrin and chloroisosulochrin to RES-1214-1 and pestheic acid respectively, regardless of chlorination. This is Non-reducing polyketide synthase ptaA from Pestalotiopsis fici (strain W106-1 / CGMCC3.15140).